The chain runs to 305 residues: Glycine--tRNA ligase alpha subunit (305 aa).

Belongs to the class-II aminoacyl-tRNA synthetase family. Tetramer of two alpha and two beta subunits.

The protein localises to the cytoplasm. The enzyme catalyses tRNA(Gly) + glycine + ATP = glycyl-tRNA(Gly) + AMP + diphosphate. The sequence is that of Glycine--tRNA ligase alpha subunit from Vibrio campbellii (strain ATCC BAA-1116).